Consider the following 473-residue polypeptide: Photosystem II CP43 reaction center protein (473 aa).

Residues 1 to 14 (MKTLYSLRRFYHVE) constitute a propeptide that is removed on maturation. Threonine 15 is subject to N-acetylthreonine. The residue at position 15 (threonine 15) is a Phosphothreonine. The next 5 membrane-spanning stretches (helical) occupy residues 69-93 (LFEVAHFVPEKPMYEQGLILLPHLA), 134-155 (LLGPETLEESFPFFGYVWKDRN), 178-200 (KALYFGGVYDTWAPGGGDVRKIT), 255-275 (KPFAWARRALVWSGEAYLSYS), and 291-312 (WFNNTAYPSEFYGPTGPEASQA). Residue glutamate 367 coordinates [CaMn4O5] cluster. The chain crosses the membrane as a helical span at residues 447 to 471 (RARAAAAGFEKGIDRDLEPVLFMTP).

This sequence belongs to the PsbB/PsbC family. PsbC subfamily. PSII is composed of 1 copy each of membrane proteins PsbA, PsbB, PsbC, PsbD, PsbE, PsbF, PsbH, PsbI, PsbJ, PsbK, PsbL, PsbM, PsbT, PsbX, PsbY, PsbZ, Psb30/Ycf12, at least 3 peripheral proteins of the oxygen-evolving complex and a large number of cofactors. It forms dimeric complexes. Binds multiple chlorophylls and provides some of the ligands for the Ca-4Mn-5O cluster of the oxygen-evolving complex. It may also provide a ligand for a Cl- that is required for oxygen evolution. PSII binds additional chlorophylls, carotenoids and specific lipids. is required as a cofactor.

The protein localises to the plastid. Its subcellular location is the chloroplast thylakoid membrane. Its function is as follows. One of the components of the core complex of photosystem II (PSII). It binds chlorophyll and helps catalyze the primary light-induced photochemical processes of PSII. PSII is a light-driven water:plastoquinone oxidoreductase, using light energy to abstract electrons from H(2)O, generating O(2) and a proton gradient subsequently used for ATP formation. The chain is Photosystem II CP43 reaction center protein from Carica papaya (Papaya).